We begin with the raw amino-acid sequence, 300 residues long: 4-hydroxy-tetrahydrodipicolinate synthase (300 aa).

Thr45 serves as a coordination point for pyruvate. Catalysis depends on Tyr140, which acts as the Proton donor/acceptor. The active-site Schiff-base intermediate with substrate is the Lys169. Pyruvate is bound at residue Ile210.

The protein belongs to the DapA family. Homotetramer; dimer of dimers.

Its subcellular location is the cytoplasm. The enzyme catalyses L-aspartate 4-semialdehyde + pyruvate = (2S,4S)-4-hydroxy-2,3,4,5-tetrahydrodipicolinate + H2O + H(+). Its pathway is amino-acid biosynthesis; L-lysine biosynthesis via DAP pathway; (S)-tetrahydrodipicolinate from L-aspartate: step 3/4. In terms of biological role, catalyzes the condensation of (S)-aspartate-beta-semialdehyde [(S)-ASA] and pyruvate to 4-hydroxy-tetrahydrodipicolinate (HTPA). The chain is 4-hydroxy-tetrahydrodipicolinate synthase from Helicobacter pylori (strain Shi470).